A 417-amino-acid chain; its full sequence is Alpha-galactosidase (417 aa).

The first 55 residues, 1–55 (MARASSSSSPPSPRLLLLLLVAVAATLLPEAAALGNFTAESRGARWRSRRARRRA), serve as a signal peptide directing secretion. Alpha-D-galactose contacts are provided by Trp71, Asp106, Asp107, Cys156, Lys183, Asp185, Trp219, Arg236, and Asp240. Cystine bridges form between Cys76-Cys108 and Cys156-Cys187. The active-site Nucleophile is the Asp185. Asp240 acts as the Proton donor in catalysis.

Belongs to the glycosyl hydrolase 27 family.

It catalyses the reaction Hydrolysis of terminal, non-reducing alpha-D-galactose residues in alpha-D-galactosides, including galactose oligosaccharides, galactomannans and galactolipids.. The enzyme catalyses melibiose + H2O = D-galactose + D-glucose. The catalysed reaction is raffinose + H2O = sucrose + D-galactose. It carries out the reaction stachyose + H2O = raffinose + D-galactose. It catalyses the reaction alpha-D-Gal-(1-&gt;6)-beta-D-Man-(1-&gt;4)-beta-D-Man-(1-&gt;4)-D-Man + H2O = beta-D-Man-(1-&gt;4)-beta-D-Man-(1-&gt;4)-D-Man + D-galactose. The enzyme catalyses beta-D-Man-(1-&gt;4)-[alpha-D-Gal-(1-&gt;6)]-beta-D-Man-(1-&gt;4)-beta-D-Man-(1-&gt;4)-D-Man + H2O = beta-D-Man-(1-&gt;4)-beta-D-Man-(1-&gt;4)-beta-D-Man-(1-&gt;4)-D-Man + D-galactose. 1 mM Hg(2+) and Ag(2+) decrease activity by 98% and 96%, respectively. 1 mM Para-chloromercuribenzoic acid (PCMB) completely inhibits enzymatic activity. Hydrolyzes melibiose, raffinose and stachyose in the following decreasing order of reactivity: raffinose, melibiose, stachyose. Acts on both the terminal alpha-galactosyl residue and the side-chain alpha-galactosyl residue of the galactomanno-oligosaccharides. This is Alpha-galactosidase from Oryza sativa subsp. japonica (Rice).